The following is a 529-amino-acid chain: Bifunctional purine biosynthesis protein PurH (529 aa).

The MGS-like domain maps to 2–149 (TNLVPVGRAL…KNHRFVNVVT (148 aa)).

It belongs to the PurH family.

It carries out the reaction (6R)-10-formyltetrahydrofolate + 5-amino-1-(5-phospho-beta-D-ribosyl)imidazole-4-carboxamide = 5-formamido-1-(5-phospho-D-ribosyl)imidazole-4-carboxamide + (6S)-5,6,7,8-tetrahydrofolate. The catalysed reaction is IMP + H2O = 5-formamido-1-(5-phospho-D-ribosyl)imidazole-4-carboxamide. Its pathway is purine metabolism; IMP biosynthesis via de novo pathway; 5-formamido-1-(5-phospho-D-ribosyl)imidazole-4-carboxamide from 5-amino-1-(5-phospho-D-ribosyl)imidazole-4-carboxamide (10-formyl THF route): step 1/1. It functions in the pathway purine metabolism; IMP biosynthesis via de novo pathway; IMP from 5-formamido-1-(5-phospho-D-ribosyl)imidazole-4-carboxamide: step 1/1. This Cereibacter sphaeroides (strain ATCC 17025 / ATH 2.4.3) (Rhodobacter sphaeroides) protein is Bifunctional purine biosynthesis protein PurH.